A 348-amino-acid polypeptide reads, in one-letter code: Quinolinate synthase (348 aa).

The iminosuccinate site is built by His-47 and Ser-68. Residue Cys-113 participates in [4Fe-4S] cluster binding. Iminosuccinate-binding positions include 139–141 (YAN) and Ser-156. Cys-200 is a [4Fe-4S] cluster binding site. Iminosuccinate is bound by residues 226–228 (HPE) and Thr-243. Residue Cys-297 coordinates [4Fe-4S] cluster.

This sequence belongs to the quinolinate synthase family. Type 1 subfamily. [4Fe-4S] cluster is required as a cofactor.

Its subcellular location is the cytoplasm. It catalyses the reaction iminosuccinate + dihydroxyacetone phosphate = quinolinate + phosphate + 2 H2O + H(+). Its pathway is cofactor biosynthesis; NAD(+) biosynthesis; quinolinate from iminoaspartate: step 1/1. Its function is as follows. Catalyzes the condensation of iminoaspartate with dihydroxyacetone phosphate to form quinolinate. In Sodalis glossinidius (strain morsitans), this protein is Quinolinate synthase.